The primary structure comprises 631 residues: MIRDTATNTTQTQAAPQQAPAQQFTQAPQEKPMQSTQSQPTPSYAGTGGINSQFTRSGNVQGGDARASEALTVFTRLKEQAVAQQDLADDFSILRFDRDQHQVGWSSLVIAKQISLNGQPVIAVRPLILPNNSIELPKRKTNIVNGMQTDVIESDIDVGTVFSAQYFNRLSTYVQNTLGKPGAKVVLAGPFPIPADLVLKDSELQLRNLLIKSVNACDDILALHSGERPFTIAGLKGQQGETLAAKVDIRTQPLHDTVGNPIRADIVVTTQRVRRNGQQENEFYETDVKLNQVAMFTNLERTPQAQAQTLFPNQQQVATPAPWVASVVITDVRNADGIQANTPEMYWFALSNAFRSTHGHAWARPFLPMTGVAKDMKDIGALGWMSALRNRIDTKAANFDDAQFGQLMLSQVQPNPVFQIDLNRMGETAQMDSLQLDAAGGPNAQKAAATIIRQINNLGGGGFERFFDHTTQPILERTGQVIDLGNWFDGDEKRDRRDLDNLAALNAAEGNENEFWGFYGAQLNPNLHPDLRNRQSRNYDRQYLGSTVTYTGKAERCTYNAKFIEALDRYLAEAGLQITMDNTSVLNSGQRFMGNSVIGNNMVSGQAQVHSAYAGTQGFNTQYQTGPSSFY.

Residues 1–29 (MIRDTATNTTQTQAAPQQAPAQQFTQAPQ) show a composition bias toward low complexity. A disordered region spans residues 1 to 63 (MIRDTATNTT…FTRSGNVQGG (63 aa)). Over residues 32–59 (PMQSTQSQPTPSYAGTGGINSQFTRSGN) the composition is skewed to polar residues. 2 homotetramerization regions span residues 590–611 (QRFM…QVHS) and 622–631 (QYQTGPSSFY).

Belongs to the Phikzvirus chimallin family. In terms of assembly, homotetramer. The tetrameric protomers further assemble as a square grid.

It localises to the host cytoplasm. In terms of biological role, self-assembles to form a proteinaceous shell that encloses the viral DNA and compartmentalizes proteins and DNA during viral infection. This micrometer-scale compartment contains narrow pores and is the site of viral replication, with the proteins involved in DNA replication localized inside. Provides a surface for docking of capsids during packaging. Probably protects the viral genome against host defenses. This chain is Chimallin, found in Pseudomonas chlororaphis (Pseudomonas chlororaphis phage 201phi2-1).